The primary structure comprises 440 residues: Tubby-like F-box protein 13 (440 aa).

Residues 51–106 (SCWASLPPELLRDIIERLEESEATWPSRKHVVACAGVCRTWREMCKEIVKNPELCG) form the F-box domain.

It belongs to the TUB family. As to expression, ubiquitous.

In Oryza sativa subsp. japonica (Rice), this protein is Tubby-like F-box protein 13 (TULP13).